A 434-amino-acid chain; its full sequence is Mitochondrial distribution and morphology protein 12 (434 aa).

The 434-residue stretch at 1 to 434 folds into the SMP-LTD domain; the sequence is MSIDIDWERA…VYPSFWTFLV (434 aa). Residues 70-83 are compositionally biased toward acidic residues; it reads YEEDDNENFSESSE. Disordered regions lie at residues 70–141 and 181–275; these read YEED…LRSP and TPLG…DDLP. Basic and acidic residues predominate over residues 86 to 97; the sequence is SPTREPVDRYGS. Residues 215 to 237 show a composition bias toward polar residues; the sequence is SAQSRPSTANTGNTLLSRGSMSS.

This sequence belongs to the MDM12 family. In terms of assembly, component of the ER-mitochondria encounter structure (ERMES) or MDM complex, composed of MMM1, MDM10, MDM12 and MDM34. An MMM1 homodimer associates with one molecule of MDM12 on each side in a pairwise head-to-tail manner, and the SMP-LTD domains of MMM1 and MDM12 generate a continuous hydrophobic tunnel for phospholipid trafficking.

It is found in the mitochondrion outer membrane. The protein localises to the endoplasmic reticulum membrane. Its function is as follows. Component of the ERMES/MDM complex, which serves as a molecular tether to connect the endoplasmic reticulum (ER) and mitochondria. Components of this complex are involved in the control of mitochondrial shape and protein biogenesis, and function in nonvesicular lipid trafficking between the ER and mitochondria. MDM12 is required for the interaction of the ER-resident membrane protein MMM1 and the outer mitochondrial membrane-resident beta-barrel protein MDM10. The MDM12-MMM1 subcomplex functions in the major beta-barrel assembly pathway that is responsible for biogenesis of all mitochondrial outer membrane beta-barrel proteins, and acts in a late step after the SAM complex. The MDM10-MDM12-MMM1 subcomplex further acts in the TOM40-specific pathway after the action of the MDM12-MMM1 complex. Essential for establishing and maintaining the structure of mitochondria and maintenance of mtDNA nucleoids. In Blastomyces gilchristii (strain SLH14081) (Blastomyces dermatitidis), this protein is Mitochondrial distribution and morphology protein 12.